The primary structure comprises 1377 residues: DNA-directed RNA polymerase subunit beta' (1377 aa).

Positions 70, 72, 85, and 88 each coordinate Zn(2+). Residues Asp460, Asp462, and Asp464 each contribute to the Mg(2+) site. Residues Cys808, Cys882, Cys889, and Cys892 each coordinate Zn(2+).

The protein belongs to the RNA polymerase beta' chain family. In terms of assembly, the RNAP catalytic core consists of 2 alpha, 1 beta, 1 beta' and 1 omega subunit. When a sigma factor is associated with the core the holoenzyme is formed, which can initiate transcription. Mg(2+) is required as a cofactor. Zn(2+) serves as cofactor.

The catalysed reaction is RNA(n) + a ribonucleoside 5'-triphosphate = RNA(n+1) + diphosphate. Functionally, DNA-dependent RNA polymerase catalyzes the transcription of DNA into RNA using the four ribonucleoside triphosphates as substrates. The polypeptide is DNA-directed RNA polymerase subunit beta' (Geotalea daltonii (strain DSM 22248 / JCM 15807 / FRC-32) (Geobacter daltonii)).